The sequence spans 460 residues: Bifunctional protein GlmU (460 aa).

Positions 1–229 are pyrophosphorylase; the sequence is MSKLNIVVLA…VWETTGVNSK (229 aa). UDP-N-acetyl-alpha-D-glucosamine is bound by residues 9–12, Lys23, Gln74, 79–80, 101–103, Gly138, Glu154, Asn169, and Asn227; these read LAAG, GT, and YGD. Asp103 serves as a coordination point for Mg(2+). A Mg(2+)-binding site is contributed by Asn227. Residues 230–250 form a linker region; sequence VQLAGLERIYQTAQANKLLEQ. The N-acetyltransferase stretch occupies residues 251-460; that stretch reads GVALADPARI…RPVKKPKPKN (210 aa). 2 residues coordinate UDP-N-acetyl-alpha-D-glucosamine: Arg333 and Lys351. His363 acts as the Proton acceptor in catalysis. 2 residues coordinate UDP-N-acetyl-alpha-D-glucosamine: Tyr366 and Asn377. Acetyl-CoA-binding positions include Ala380, 386-387, Ser405, Ala423, and Arg440; that span reads NY.

In the N-terminal section; belongs to the N-acetylglucosamine-1-phosphate uridyltransferase family. This sequence in the C-terminal section; belongs to the transferase hexapeptide repeat family. In terms of assembly, homotrimer. Requires Mg(2+) as cofactor.

The protein resides in the cytoplasm. The enzyme catalyses alpha-D-glucosamine 1-phosphate + acetyl-CoA = N-acetyl-alpha-D-glucosamine 1-phosphate + CoA + H(+). It carries out the reaction N-acetyl-alpha-D-glucosamine 1-phosphate + UTP + H(+) = UDP-N-acetyl-alpha-D-glucosamine + diphosphate. It participates in nucleotide-sugar biosynthesis; UDP-N-acetyl-alpha-D-glucosamine biosynthesis; N-acetyl-alpha-D-glucosamine 1-phosphate from alpha-D-glucosamine 6-phosphate (route II): step 2/2. It functions in the pathway nucleotide-sugar biosynthesis; UDP-N-acetyl-alpha-D-glucosamine biosynthesis; UDP-N-acetyl-alpha-D-glucosamine from N-acetyl-alpha-D-glucosamine 1-phosphate: step 1/1. The protein operates within bacterial outer membrane biogenesis; LPS lipid A biosynthesis. Its function is as follows. Catalyzes the last two sequential reactions in the de novo biosynthetic pathway for UDP-N-acetylglucosamine (UDP-GlcNAc). The C-terminal domain catalyzes the transfer of acetyl group from acetyl coenzyme A to glucosamine-1-phosphate (GlcN-1-P) to produce N-acetylglucosamine-1-phosphate (GlcNAc-1-P), which is converted into UDP-GlcNAc by the transfer of uridine 5-monophosphate (from uridine 5-triphosphate), a reaction catalyzed by the N-terminal domain. The sequence is that of Bifunctional protein GlmU from Nitrosospira multiformis (strain ATCC 25196 / NCIMB 11849 / C 71).